Here is a 405-residue protein sequence, read N- to C-terminus: Venom serine protease 34 (405 aa).

Positions 1–35 (MIFTNNIAAFQNVVLVKKVKIVLLIFYGSIMFSMT) are cleaved as a signal peptide. Disulfide bonds link cysteine 42/cysteine 70 and cysteine 95/cysteine 111. The CUB domain occupies 42-147 (CDYYQNLNLG…EVRPIKRVKD (106 aa)). The N-linked (GlcNAc...) asparagine glycan is linked to asparagine 113. A Peptidase S1 domain is found at 161–397 (IVGGTNTGIN…YIDWIVSQTP (237 aa)). Cysteine 188 and cysteine 204 form a disulfide bridge. Histidine 203 serves as the catalytic Charge relay system. N-linked (GlcNAc...) asparagine glycosylation is found at asparagine 209 and asparagine 229. Aspartate 257 functions as the Charge relay system in the catalytic mechanism. 2 disulfides stabilise this stretch: cysteine 323–cysteine 336 and cysteine 345–cysteine 375. The active-site Charge relay system is serine 349.

Belongs to the peptidase S1 family. Expressed by the venom duct.

It localises to the secreted. This is Venom serine protease 34 from Apis mellifera (Honeybee).